We begin with the raw amino-acid sequence, 329 residues long: Phospho-N-acetylmuramoyl-pentapeptide-transferase (329 aa).

9 helical membrane passes run 1–21 (MLLN…IGIP), 53–73 (MGGF…ALVF), 76–96 (FSPA…IGFL), 109–129 (GLTA…SYFI), 141–161 (ILSW…IWLV), 175–195 (GLAS…AVVH), 198–218 (YDVL…FVFN), 237–257 (FLAI…IGAV), and 309–329 (IVFW…YFAF).

This sequence belongs to the glycosyltransferase 4 family. MraY subfamily. Mg(2+) is required as a cofactor.

The protein localises to the cell membrane. The enzyme catalyses UDP-N-acetyl-alpha-D-muramoyl-L-alanyl-gamma-D-glutamyl-L-lysyl-D-alanyl-D-alanine + di-trans,octa-cis-undecaprenyl phosphate = Mur2Ac(oyl-L-Ala-gamma-D-Glu-L-Lys-D-Ala-D-Ala)-di-trans,octa-cis-undecaprenyl diphosphate + UMP. The protein operates within cell wall biogenesis; peptidoglycan biosynthesis. In terms of biological role, catalyzes the initial step of the lipid cycle reactions in the biosynthesis of the cell wall peptidoglycan: transfers peptidoglycan precursor phospho-MurNAc-pentapeptide from UDP-MurNAc-pentapeptide onto the lipid carrier undecaprenyl phosphate, yielding undecaprenyl-pyrophosphoryl-MurNAc-pentapeptide, known as lipid I. This is Phospho-N-acetylmuramoyl-pentapeptide-transferase from Lactococcus lactis subsp. cremoris (strain MG1363).